Consider the following 217-residue polypeptide: Large ribosomal subunit protein bL25 (217 aa).

The interval 178–217 is disordered; sequence VVAPTEEPTEEEIEAMEGEQQTEEPEVVGESKEDEEKTEE. Positions 184 to 205 are enriched in acidic residues; sequence EPTEEEIEAMEGEQQTEEPEVV. Residues 206-217 show a composition bias toward basic and acidic residues; that stretch reads GESKEDEEKTEE.

It belongs to the bacterial ribosomal protein bL25 family. CTC subfamily. As to quaternary structure, part of the 50S ribosomal subunit; part of the 5S rRNA/L5/L18/L25 subcomplex. Contacts the 5S rRNA. Binds to the 5S rRNA independently of L5 and L18.

In terms of biological role, this is one of the proteins that binds to the 5S RNA in the ribosome where it forms part of the central protuberance. In Staphylococcus aureus (strain USA300), this protein is Large ribosomal subunit protein bL25.